The sequence spans 524 residues: Lysine--tRNA ligase (524 aa).

Mg(2+) contacts are provided by Glu433 and Glu440.

This sequence belongs to the class-II aminoacyl-tRNA synthetase family. In terms of assembly, homodimer. Requires Mg(2+) as cofactor.

The protein localises to the cytoplasm. The catalysed reaction is tRNA(Lys) + L-lysine + ATP = L-lysyl-tRNA(Lys) + AMP + diphosphate. The polypeptide is Lysine--tRNA ligase (Colwellia psychrerythraea (strain 34H / ATCC BAA-681) (Vibrio psychroerythus)).